Consider the following 288-residue polypeptide: Cyclin-dependent kinase 2 homolog (288 aa).

Positions 4-284 (YHGLEKIGEG…AKQALEHAYF (281 aa)) constitute a Protein kinase domain. ATP is bound by residues 10 to 18 (IGEGTYGVV) and Lys32. The residue at position 14 (Thr14) is a Phosphothreonine. The residue at position 15 (Tyr15) is a Phosphotyrosine. Catalysis depends on Asp125, which acts as the Proton acceptor. Residue Thr158 is modified to Phosphothreonine.

It belongs to the protein kinase superfamily. CMGC Ser/Thr protein kinase family. CDC2/CDKX subfamily. In terms of assembly, may form a complex composed of at least the catalytic subunit CRK2 and a cyclin. Requires Mg(2+) as cofactor. Post-translationally, autophosphorylates in presence of cyclin cyc-1 but not in presence of cyclin cyc-3.

The protein resides in the cytoplasm. The enzyme catalyses L-seryl-[protein] + ATP = O-phospho-L-seryl-[protein] + ADP + H(+). It catalyses the reaction L-threonyl-[protein] + ATP = O-phospho-L-threonyl-[protein] + ADP + H(+). It carries out the reaction [DNA-directed RNA polymerase] + ATP = phospho-[DNA-directed RNA polymerase] + ADP + H(+). Phosphorylation at Thr-14 or Tyr-15 inactivates the enzyme, while phosphorylation at Thr-158 activates it. Activated by cyclin cyc-1 in vitro. Activated by cyclin cyc-3 in vitro. In terms of biological role, serine/threonine-protein kinase. Involved in the control of the cell cycle. Required for entry into S-phase and mitosis. Probable component of the kinase complex that phosphorylates the repetitive C-terminus of RNA polymerase II. In schizonts, phosphorylates ORC1 resulting in its dissociation from DNA, relocalization to the cytoplasm and likely its degradation. This chain is Cyclin-dependent kinase 2 homolog, found in Plasmodium falciparum (isolate 3D7).